A 927-amino-acid polypeptide reads, in one-letter code: Solute carrier family 12 protein B0303.11 (927 aa).

The Cytoplasmic segment spans residues methionine 1–aspartate 23. A helical membrane pass occupies residues valine 24–isoleucine 44. Residues valine 45–threonine 53 are Extracellular-facing. A helical membrane pass occupies residues isoleucine 54 to valine 74. The Cytoplasmic portion of the chain corresponds to valine 75 to glutamate 95. The chain crosses the membrane as a helical span at residues phenylalanine 96–leucine 116. At threonine 117–aspartate 141 the chain is on the extracellular side. Residues leucine 142–valine 159 traverse the membrane as a helical segment. The Cytoplasmic portion of the chain corresponds to arginine 160–arginine 165. Residues phenylalanine 166–valine 186 traverse the membrane as a helical segment. Over methionine 187–glutamate 212 the chain is Extracellular. The helical transmembrane segment at isoleucine 213 to isoleucine 233 threads the bilayer. The Cytoplasmic portion of the chain corresponds to glycine 234–glycine 244. Residues alanine 245–valine 265 traverse the membrane as a helical segment. Residues glutamate 266–glutamate 284 are Extracellular-facing. Residue asparagine 275 is glycosylated (N-linked (GlcNAc...) asparagine). A helical transmembrane segment spans residues phenylalanine 285 to leucine 305. The Cytoplasmic portion of the chain corresponds to serine 306 to arginine 345. The helical transmembrane segment at cysteine 346–leucine 366 threads the bilayer. Residue cysteine 367 is a topological domain, extracellular. A helical transmembrane segment spans residues isoleucine 368–valine 388. Over lysine 389 to glutamate 394 the chain is Cytoplasmic. A helical membrane pass occupies residues isoleucine 395–leucine 415. The Extracellular portion of the chain corresponds to tyrosine 416–arginine 419. The chain crosses the membrane as a helical span at residues histidine 420–isoleucine 440. The Cytoplasmic portion of the chain corresponds to arginine 441–proline 927.

This sequence belongs to the SLC12A transporter family.

It is found in the cell membrane. In Caenorhabditis elegans, this protein is Solute carrier family 12 protein B0303.11.